The chain runs to 354 residues: Chorismate synthase (354 aa).

Residue arginine 48 coordinates NADP(+). Residues 126–128, alanine 278, 293–297, and arginine 319 each bind FMN; these read RAS and KPIPS.

This sequence belongs to the chorismate synthase family. As to quaternary structure, homotetramer. FMNH2 is required as a cofactor.

It catalyses the reaction 5-O-(1-carboxyvinyl)-3-phosphoshikimate = chorismate + phosphate. The protein operates within metabolic intermediate biosynthesis; chorismate biosynthesis; chorismate from D-erythrose 4-phosphate and phosphoenolpyruvate: step 7/7. Functionally, catalyzes the anti-1,4-elimination of the C-3 phosphate and the C-6 proR hydrogen from 5-enolpyruvylshikimate-3-phosphate (EPSP) to yield chorismate, which is the branch point compound that serves as the starting substrate for the three terminal pathways of aromatic amino acid biosynthesis. This reaction introduces a second double bond into the aromatic ring system. The sequence is that of Chorismate synthase from Desulfosudis oleivorans (strain DSM 6200 / JCM 39069 / Hxd3) (Desulfococcus oleovorans).